The primary structure comprises 66 residues: COP-associated protein (66 aa).

The 66-residue stretch at 1–66 (MKATFQVPSI…ALLDAGQEVV (66 aa)) folds into the HMA domain. Cu cation-binding residues include Cys-12 and Cys-15. Cys-12 and Cys-15 are disulfide-bonded.

Functionally, part of a cation-transporting system which is associated with copper export out of the H.pylori cells. This is COP-associated protein (copP) from Helicobacter pylori (strain ATCC 700392 / 26695) (Campylobacter pylori).